Consider the following 682-residue polypeptide: Putative L-type lectin-domain containing receptor kinase I.1 (682 aa).

The N-terminal stretch at 1-19 (MAQRLHLLLLLFLICFVNL) is a signal peptide. Residues 20 to 292 (ISFSSQQDLS…RPKKPEKTSP (273 aa)) lie on the Extracellular side of the membrane. The tract at residues 27–264 (DLSFIYNGFN…YQYILGWSFS (238 aa)) is legume-lectin like. 5 N-linked (GlcNAc...) asparagine glycosylation sites follow: asparagine 60, asparagine 130, asparagine 187, asparagine 210, and asparagine 231. The helical transmembrane segment at 293-313 (LLIVLLIILAIIVMVVVGGFY) threads the bilayer. The Cytoplasmic portion of the chain corresponds to 314–682 (LYRRKKYAEV…SHTIIYGDGR (369 aa)). Residues 348 to 622 (FNKDGRLGRG…VQYINRHQRL (275 aa)) form the Protein kinase domain. Residues 354 to 362 (LGRGGFGEV) and lysine 376 each bind ATP. Aspartate 472 (proton acceptor) is an active-site residue.

In the C-terminal section; belongs to the protein kinase superfamily. Ser/Thr protein kinase family. It in the N-terminal section; belongs to the leguminous lectin family.

The protein resides in the cell membrane. The catalysed reaction is L-seryl-[protein] + ATP = O-phospho-L-seryl-[protein] + ADP + H(+). It carries out the reaction L-threonyl-[protein] + ATP = O-phospho-L-threonyl-[protein] + ADP + H(+). Involved in resistance response to the pathogenic fungus Alternaria brassicicola. The polypeptide is Putative L-type lectin-domain containing receptor kinase I.1 (Arabidopsis thaliana (Mouse-ear cress)).